The primary structure comprises 479 residues: Cardiolipin synthase A (479 aa).

2 helical membrane passes run phenylalanine 8 to leucine 28 and isoleucine 38 to phenylalanine 58. 2 consecutive PLD phosphodiesterase domains span residues valine 218–tyrosine 245 and glutamine 392–serine 419. Catalysis depends on residues histidine 223, lysine 225, aspartate 230, histidine 397, lysine 399, and aspartate 404.

The protein belongs to the phospholipase D family. Cardiolipin synthase subfamily. ClsA sub-subfamily.

The protein localises to the cell inner membrane. It carries out the reaction 2 a 1,2-diacyl-sn-glycero-3-phospho-(1'-sn-glycerol) = a cardiolipin + glycerol. Its function is as follows. Catalyzes the reversible phosphatidyl group transfer from one phosphatidylglycerol molecule to another to form cardiolipin (CL) (diphosphatidylglycerol) and glycerol. This chain is Cardiolipin synthase A, found in Pseudomonas putida (strain ATCC 700007 / DSM 6899 / JCM 31910 / BCRC 17059 / LMG 24140 / F1).